The following is a 530-amino-acid chain: Anthranilate synthase component 1, pyocyanine specific (530 aa).

Substrate is bound at residue 331–332 (GT). Glu-364 serves as a coordination point for Mg(2+). Substrate contacts are provided by residues Tyr-452, Arg-472, 486 to 488 (GAG), and Gly-488. Glu-501 is a binding site for Mg(2+).

This sequence belongs to the anthranilate synthase component I family. In terms of assembly, heterotetramer consisting of two non-identical subunits: a beta subunit (PhnB) and a large alpha subunit (PhnA). Requires Mg(2+) as cofactor.

The catalysed reaction is chorismate + L-glutamine = anthranilate + pyruvate + L-glutamate + H(+). The protein operates within secondary metabolite biosynthesis; pyocyanine biosynthesis. Part of a heterotetrameric complex that catalyzes the two-step biosynthesis of anthranilate, a precursor for Pseudomonas quinolone signal (2-heptyl-3-hydroxy-4-quinolone; PQS) production which is required to induce the genes for the biosynthesis of the virulence factor pyocyanine (PCN), a characteristic blue-green phenazine pigment produced by P.aeruginosa. In the first step, the glutamine-binding beta subunit (PhnB) of anthranilate synthase (AS) provides the glutamine amidotransferase activity which generates ammonia as a substrate that, along with chorismate, is used in the second step, catalyzed by the large alpha subunit of AS (PhnA) to produce anthranilate. This is Anthranilate synthase component 1, pyocyanine specific from Pseudomonas aeruginosa (strain ATCC 15692 / DSM 22644 / CIP 104116 / JCM 14847 / LMG 12228 / 1C / PRS 101 / PAO1).